A 265-amino-acid polypeptide reads, in one-letter code: 3-methyl-2-oxobutanoate hydroxymethyltransferase (265 aa).

Residues Asp41 and Asp80 each contribute to the Mg(2+) site. Residues 41-42 (DS), Asp80, and Lys109 each bind 3-methyl-2-oxobutanoate. Glu111 provides a ligand contact to Mg(2+). Catalysis depends on Glu178, which acts as the Proton acceptor.

The protein belongs to the PanB family. Homodecamer; pentamer of dimers. It depends on Mg(2+) as a cofactor.

Its subcellular location is the cytoplasm. The catalysed reaction is 3-methyl-2-oxobutanoate + (6R)-5,10-methylene-5,6,7,8-tetrahydrofolate + H2O = 2-dehydropantoate + (6S)-5,6,7,8-tetrahydrofolate. It functions in the pathway cofactor biosynthesis; (R)-pantothenate biosynthesis; (R)-pantoate from 3-methyl-2-oxobutanoate: step 1/2. Functionally, catalyzes the reversible reaction in which hydroxymethyl group from 5,10-methylenetetrahydrofolate is transferred onto alpha-ketoisovalerate to form ketopantoate. The chain is 3-methyl-2-oxobutanoate hydroxymethyltransferase from Thermosipho africanus (strain TCF52B).